Consider the following 203-residue polypeptide: ATP-dependent Clp protease proteolytic subunit 2 (203 aa).

Residue serine 100 is the Nucleophile of the active site. Residue histidine 125 is part of the active site.

The protein belongs to the peptidase S14 family. As to quaternary structure, fourteen ClpP subunits assemble into 2 heptameric rings which stack back to back to give a disk-like structure with a central cavity, resembling the structure of eukaryotic proteasomes.

The protein resides in the cytoplasm. The enzyme catalyses Hydrolysis of proteins to small peptides in the presence of ATP and magnesium. alpha-casein is the usual test substrate. In the absence of ATP, only oligopeptides shorter than five residues are hydrolyzed (such as succinyl-Leu-Tyr-|-NHMec, and Leu-Tyr-Leu-|-Tyr-Trp, in which cleavage of the -Tyr-|-Leu- and -Tyr-|-Trp bonds also occurs).. In terms of biological role, cleaves peptides in various proteins in a process that requires ATP hydrolysis. Has a chymotrypsin-like activity. Plays a major role in the degradation of misfolded proteins. This Thermobifida fusca (strain YX) protein is ATP-dependent Clp protease proteolytic subunit 2.